Reading from the N-terminus, the 532-residue chain is T-complex protein 1 subunit beta (532 aa).

This sequence belongs to the TCP-1 chaperonin family. As to quaternary structure, heterooligomeric complex of about 850 to 900 kDa that forms two stacked rings, 12 to 16 nm in diameter.

It localises to the cytoplasm. Functionally, molecular chaperone; assists the folding of proteins upon ATP hydrolysis. Known to play a role, in vitro, in the folding of actin and tubulin. The chain is T-complex protein 1 subunit beta (cct2) from Dictyostelium discoideum (Social amoeba).